A 458-amino-acid polypeptide reads, in one-letter code: F-box/WD repeat-containing protein 9 (458 aa).

Met1 is modified (N-acetylmethionine). Positions 1-28 (MELPPGPRDDPHAWDDDSDPELEPDTDA) are disordered. Over residues 16-28 (DDSDPELEPDTDA) the composition is skewed to acidic residues. 2 positions are modified to phosphoserine: Ser18 and Ser59. Residues 76–123 (VPGLLSLPPELLLEICAYLDARLVLHVLPRVCHALRDLVRDRVTWRLR) form the F-box domain. 7 WD repeats span residues 171–210 (GHFASIDSVLLLQGGTLCLSGSRDRNVNLWDLQQLGVEPS), 224–261 (THKGWVWSLAALDHRVCSGSWDSTVKLWDMAADGQQFG), 264–301 (KGKAAVLCLSYRPDILVTGTYDKKVTVYDPRVGPALLK), 305–342 (LHSSAVLALLADDRHIISGSEDHTLVVFDRRANSVLQR), 344–381 (QLDSYLLCMSYQEPQLWAGDNQGLLHVFANRSGCFQLV), 387–424 (GHRSQITGIKHSLGALYTTSTDKTIRVHVPTDPPRTIC), and 427–458 (SHHNVLNGICAEGNLVVAASGGLSLEVWRLQA).

In terms of assembly, interacts with SKP1 and CUL1.

Substrate-recognition component of the SCF (SKP1-CUL1-F-box protein)-type E3 ubiquitin ligase complex. In Bos taurus (Bovine), this protein is F-box/WD repeat-containing protein 9 (FBXW9).